The chain runs to 122 residues: Large ribosomal subunit protein uL14 (122 aa).

The protein belongs to the universal ribosomal protein uL14 family. As to quaternary structure, part of the 50S ribosomal subunit. Forms a cluster with proteins L3 and L19. In the 70S ribosome, L14 and L19 interact and together make contacts with the 16S rRNA in bridges B5 and B8.

Binds to 23S rRNA. Forms part of two intersubunit bridges in the 70S ribosome. This Methylobacterium radiotolerans (strain ATCC 27329 / DSM 1819 / JCM 2831 / NBRC 15690 / NCIMB 10815 / 0-1) protein is Large ribosomal subunit protein uL14.